Consider the following 1212-residue polypeptide: Dermatan-sulfate epimerase-like protein (1212 aa).

The first 20 residues, 1–20 (MALMFTGHLLFLALLMFAFS), serve as a signal peptide directing secretion. N-linked (GlcNAc...) asparagine glycans are attached at residues Asn28, Asn666, Asn688, and Asn709. A run of 2 helical transmembrane segments spans residues 764-784 (IIFPFGFKFNIAVGLILCISL) and 803-823 (WILILVIALWFIELLDVWSTC). N-linked (GlcNAc...) asparagine glycosylation occurs at Asn874.

This sequence belongs to the dermatan-sulfate isomerase family. In terms of tissue distribution, expressed in different brain areas as well as in multiple other peripheral tissues.

The protein localises to the membrane. This Homo sapiens (Human) protein is Dermatan-sulfate epimerase-like protein (DSEL).